An 89-amino-acid chain; its full sequence is Small ribosomal subunit protein uS14A (89 aa).

This sequence belongs to the universal ribosomal protein uS14 family. As to quaternary structure, part of the 30S ribosomal subunit. Contacts proteins S3 and S10.

Binds 16S rRNA, required for the assembly of 30S particles and may also be responsible for determining the conformation of the 16S rRNA at the A site. The sequence is that of Small ribosomal subunit protein uS14A from Bacillus velezensis (strain DSM 23117 / BGSC 10A6 / LMG 26770 / FZB42) (Bacillus amyloliquefaciens subsp. plantarum).